The sequence spans 346 residues: Methylthioribose-1-phosphate isomerase (346 aa).

Substrate-binding positions include arginine 48–alanine 50, arginine 91, and glutamine 200. Aspartate 241 serves as the catalytic Proton donor. Asparagine 251 to lysine 252 is a binding site for substrate.

It belongs to the eIF-2B alpha/beta/delta subunits family. MtnA subfamily.

The enzyme catalyses 5-(methylsulfanyl)-alpha-D-ribose 1-phosphate = 5-(methylsulfanyl)-D-ribulose 1-phosphate. The protein operates within amino-acid biosynthesis; L-methionine biosynthesis via salvage pathway; L-methionine from S-methyl-5-thio-alpha-D-ribose 1-phosphate: step 1/6. In terms of biological role, catalyzes the interconversion of methylthioribose-1-phosphate (MTR-1-P) into methylthioribulose-1-phosphate (MTRu-1-P). The polypeptide is Methylthioribose-1-phosphate isomerase (Picosynechococcus sp. (strain ATCC 27264 / PCC 7002 / PR-6) (Agmenellum quadruplicatum)).